Reading from the N-terminus, the 70-residue chain is MIIPWQDIAPETLENLIREFVLREGTDYGSVEVSLQSKIDQVKSQLEKGEAVIVFSELHETVDIQLKAKF.

It belongs to the UPF0270 family.

The chain is UPF0270 protein VIBHAR_00073 from Vibrio campbellii (strain ATCC BAA-1116).